The primary structure comprises 485 residues: Adenosylhomocysteinase (485 aa).

T64, D139, and E205 together coordinate substrate. NAD(+) is bound at residue 206–208; the sequence is TTT. Substrate-binding residues include K235 and D239. NAD(+)-binding positions include N240, 269–274, E292, N327, 348–350, and N397; these read GYGDVG and IGH.

The protein belongs to the adenosylhomocysteinase family. Homotetramer. NAD(+) serves as cofactor.

The catalysed reaction is S-adenosyl-L-homocysteine + H2O = L-homocysteine + adenosine. Its pathway is amino-acid biosynthesis; L-homocysteine biosynthesis; L-homocysteine from S-adenosyl-L-homocysteine: step 1/1. Functionally, adenosylhomocysteine is a competitive inhibitor of S-adenosyl-L-methionine-dependent methyl transferase reactions; therefore adenosylhomocysteinase may play a key role in the control of methylations via regulation of the intracellular concentration of adenosylhomocysteine. The protein is Adenosylhomocysteinase (SAHH) of Catharanthus roseus (Madagascar periwinkle).